A 117-amino-acid chain; its full sequence is Fluoride-specific ion channel FluC 2 (117 aa).

2 helical membrane passes run 1–21 (MISIILVMIGGGFGAIARSAI) and 46–66 (FLIGLTIGLSISISWFPAFFV). Residues Gly-71 and Thr-74 each coordinate Na(+). The helical transmembrane segment at 95 to 115 (LFLNYSLLQFIIGFIACYIGY) threads the bilayer.

It belongs to the fluoride channel Fluc/FEX (TC 1.A.43) family.

The protein localises to the cell membrane. It carries out the reaction fluoride(in) = fluoride(out). With respect to regulation, na(+) is not transported, but it plays an essential structural role and its presence is essential for fluoride channel function. In terms of biological role, fluoride-specific ion channel. Important for reducing fluoride concentration in the cell, thus reducing its toxicity. The sequence is that of Fluoride-specific ion channel FluC 2 from Staphylococcus aureus (strain Mu50 / ATCC 700699).